Reading from the N-terminus, the 408-residue chain is tRNA-specific 2-thiouridylase MnmA (408 aa).

ATP contacts are provided by residues 27-34 and Leu53; that span reads AMSGGVDS. Catalysis depends on Cys121, which acts as the Nucleophile. The cysteines at positions 121 and 222 are disulfide-linked. Gly145 is a binding site for ATP. Residues 172-174 are interaction with tRNA; it reads RDQ. Cys222 serves as the catalytic Cysteine persulfide intermediate.

Belongs to the MnmA/TRMU family.

The protein localises to the cytoplasm. The catalysed reaction is S-sulfanyl-L-cysteinyl-[protein] + uridine(34) in tRNA + AH2 + ATP = 2-thiouridine(34) in tRNA + L-cysteinyl-[protein] + A + AMP + diphosphate + H(+). Catalyzes the 2-thiolation of uridine at the wobble position (U34) of tRNA, leading to the formation of s(2)U34. This chain is tRNA-specific 2-thiouridylase MnmA, found in Rhizobium etli (strain CIAT 652).